We begin with the raw amino-acid sequence, 291 residues long: ATP phosphoribosyltransferase (291 aa).

The protein belongs to the ATP phosphoribosyltransferase family. Long subfamily. Requires Mg(2+) as cofactor.

Its subcellular location is the cytoplasm. It catalyses the reaction 1-(5-phospho-beta-D-ribosyl)-ATP + diphosphate = 5-phospho-alpha-D-ribose 1-diphosphate + ATP. It functions in the pathway amino-acid biosynthesis; L-histidine biosynthesis; L-histidine from 5-phospho-alpha-D-ribose 1-diphosphate: step 1/9. With respect to regulation, feedback inhibited by histidine. In terms of biological role, catalyzes the condensation of ATP and 5-phosphoribose 1-diphosphate to form N'-(5'-phosphoribosyl)-ATP (PR-ATP). Has a crucial role in the pathway because the rate of histidine biosynthesis seems to be controlled primarily by regulation of HisG enzymatic activity. This Geotalea uraniireducens (strain Rf4) (Geobacter uraniireducens) protein is ATP phosphoribosyltransferase.